The sequence spans 126 residues: uncharacterized protein (126 aa).

Positions 1 to 46 (MREEEAAAVVTVPQAGRDGEQPGPPAGLGCAAVRGEPGGGGPQESR) are disordered.

The protein localises to the cytoplasm. It localises to the cytoskeleton. Its subcellular location is the cilium basal body. This is an uncharacterized protein from Bos taurus (Bovine).